The following is a 467-amino-acid chain: Ammonium transporter Rh type C (467 aa).

Residues 1–3 (MRL) lie on the Cytoplasmic side of the membrane. The chain crosses the membrane as a helical span at residues 4–24 (RLPVVCFLWEIAMIVLFGIFV). The Extracellular portion of the chain corresponds to 25–55 (RYNDEADPHWSEFMKAQNITSDIQNDYYFRY). A glycan (N-linked (GlcNAc...) asparagine) is linked at Asn-42. The helical transmembrane segment at 56–76 (PSFQDVHVMIFVGFGFLMTFL) threads the bilayer. The Cytoplasmic portion of the chain corresponds to 77 to 80 (KRYG). The chain crosses the membrane as a helical span at residues 81 to 101 (FGSVAFNFLLAAFGIQWAILM). At 102-119 (QGWFHTFKNGKILIGVES) the chain is on the extracellular side. A helical transmembrane segment spans residues 120 to 139 (LINADFCVGSVCIAFGAILG). The Cytoplasmic portion of the chain corresponds to 140–145 (KVSPVQ). A helical membrane pass occupies residues 146-168 (IMVMTLFQVTLFAVNEWILLNLL). At 169-173 (HVNDA) the chain is on the extracellular side. A helical membrane pass occupies residues 174 to 194 (GGSMTIHTFGAYFGLTVAWIL). Over 195-213 (NRPRLKQTNDKEGSVYVSD) the chain is Cytoplasmic. The chain crosses the membrane as a helical span at residues 214–234 (LFSMIGTLFLWMFWPSFNSAV). Residues 235–245 (SYHGDAQHRAA) are Extracellular-facing. Residues 246 to 266 (INTYCSLAACVLTTVAISSVV) traverse the membrane as a helical segment. Residues 267 to 271 (NKKGK) lie on the Cytoplasmic side of the membrane. The helical transmembrane segment at 272–292 (LEMVHIQNATLAGGVAVGTAA) threads the bilayer. Over 293–295 (EMM) the chain is Extracellular. A helical membrane pass occupies residues 296-316 (LTPYGSLIVGFICGIVSTLGF). Residues 317 to 337 (TYCSPFLSNKLRLHDTCGIHN) are Cytoplasmic-facing. A helical transmembrane segment spans residues 338 to 358 (LHAMPGLIGGIVGAVTAACAT). At 359-390 (EAVYTADGLKKMFRFEGDYATRTPSMQGGYQA) the chain is on the extracellular side. A helical membrane pass occupies residues 391 to 411 (AGLCVSLAFGLVGGTVVGCIL). The Cytoplasmic portion of the chain corresponds to 412-467 (KLPIWGDPSDENCFDDEVYWELPEEDEEEHLGAANQYVTHLPENFKLPDRTEVAFK).

This sequence belongs to the ammonium transporter (TC 2.A.49) family. Rh subfamily. As to quaternary structure, homotrimer.

It localises to the apical cell membrane. In terms of biological role, functions as an ammonia transporter. In Xenopus tropicalis (Western clawed frog), this protein is Ammonium transporter Rh type C (rhcg).